Consider the following 782-residue polypeptide: Endonuclease MutS2 (782 aa).

336–343 is a binding site for ATP; it reads GPNTGGKT. The Smr domain occupies 707–782; the sequence is LDLRGYRYED…GFGVTVATLK (76 aa).

Belongs to the DNA mismatch repair MutS family. MutS2 subfamily. In terms of assembly, homodimer. Binds to stalled ribosomes, contacting rRNA.

In terms of biological role, endonuclease that is involved in the suppression of homologous recombination and thus may have a key role in the control of bacterial genetic diversity. Its function is as follows. Acts as a ribosome collision sensor, splitting the ribosome into its 2 subunits. Detects stalled/collided 70S ribosomes which it binds and splits by an ATP-hydrolysis driven conformational change. Acts upstream of the ribosome quality control system (RQC), a ribosome-associated complex that mediates the extraction of incompletely synthesized nascent chains from stalled ribosomes and their subsequent degradation. Probably generates substrates for RQC. The chain is Endonuclease MutS2 from Staphylococcus aureus (strain Mu50 / ATCC 700699).